A 353-amino-acid chain; its full sequence is Thiamine-phosphate synthase (353 aa).

A unknown region spans residues 1–128 (MKSMPVAPIA…AASAAAIRYG (128 aa)). A thiamine-phosphate synthase region spans residues 129–353 (LYDLEVTVLQ…TSLQLLEALR (225 aa)). 4-amino-2-methyl-5-(diphosphooxymethyl)pyrimidine-binding positions include 185-189 (QYRNK) and asparagine 217. Residues aspartate 218 and aspartate 237 each coordinate Mg(2+). Serine 256 serves as a coordination point for 4-amino-2-methyl-5-(diphosphooxymethyl)pyrimidine. Residue 282 to 284 (TAT) participates in 2-[(2R,5Z)-2-carboxy-4-methylthiazol-5(2H)-ylidene]ethyl phosphate binding. 4-amino-2-methyl-5-(diphosphooxymethyl)pyrimidine is bound at residue lysine 285. 2-[(2R,5Z)-2-carboxy-4-methylthiazol-5(2H)-ylidene]ethyl phosphate is bound at residue glycine 312.

Belongs to the thiamine-phosphate synthase family. The cofactor is Mg(2+).

It catalyses the reaction 2-[(2R,5Z)-2-carboxy-4-methylthiazol-5(2H)-ylidene]ethyl phosphate + 4-amino-2-methyl-5-(diphosphooxymethyl)pyrimidine + 2 H(+) = thiamine phosphate + CO2 + diphosphate. The enzyme catalyses 2-(2-carboxy-4-methylthiazol-5-yl)ethyl phosphate + 4-amino-2-methyl-5-(diphosphooxymethyl)pyrimidine + 2 H(+) = thiamine phosphate + CO2 + diphosphate. The catalysed reaction is 4-methyl-5-(2-phosphooxyethyl)-thiazole + 4-amino-2-methyl-5-(diphosphooxymethyl)pyrimidine + H(+) = thiamine phosphate + diphosphate. It participates in cofactor biosynthesis; thiamine diphosphate biosynthesis; thiamine phosphate from 4-amino-2-methyl-5-diphosphomethylpyrimidine and 4-methyl-5-(2-phosphoethyl)-thiazole: step 1/1. Functionally, condenses 4-methyl-5-(beta-hydroxyethyl)thiazole monophosphate (THZ-P) and 2-methyl-4-amino-5-hydroxymethyl pyrimidine pyrophosphate (HMP-PP) to form thiamine monophosphate (TMP). The polypeptide is Thiamine-phosphate synthase (Prochlorococcus marinus (strain MIT 9303)).